The following is a 351-amino-acid chain: Photosystem II D2 protein (351 aa).

A helical membrane pass occupies residues 39–59; it reads TAYLALGGWFTGTTFVTSWYT. Position 116 (His-116) interacts with chlorophyll a. The helical transmembrane segment at 123–139 threads the bilayer; the sequence is GFMLRQFEIARLVGIRP. Positions 128 and 141 each coordinate pheophytin a. A helical transmembrane segment spans residues 151-164; that stretch reads VFLACFLIYPLGQH. His-196 serves as a coordination point for chlorophyll a. A helical membrane pass occupies residues 206–226; it reads GALLCGIHGATVQNTLFEDGA. Residues His-213 and Phe-260 each contribute to the a plastoquinone site. His-213 is a Fe cation binding site. Position 267 (His-267) interacts with Fe cation. Residues 277 to 293 traverse the membrane as a helical segment; that stretch reads GMWTPSVGIVGLAVNLR.

Belongs to the reaction center PufL/M/PsbA/D family. PSII is composed of 1 copy each of membrane proteins PsbA, PsbB, PsbC, PsbD, PsbE, PsbF, PsbH, PsbI, PsbJ, PsbK, PsbL, PsbM, PsbT, PsbX, PsbY, Psb30/Ycf12, peripheral proteins PsbO, CyanoQ (PsbQ), PsbU, PsbV and a large number of cofactors. It forms dimeric complexes. The cofactor is The D1/D2 heterodimer binds P680, chlorophylls that are the primary electron donor of PSII, and subsequent electron acceptors. It shares a non-heme iron and each subunit binds pheophytin, quinone, additional chlorophylls, carotenoids and lipids. There is also a Cl(-1) ion associated with D1 and D2, which is required for oxygen evolution. The PSII complex binds additional chlorophylls, carotenoids and specific lipids..

The protein resides in the cellular thylakoid membrane. The enzyme catalyses 2 a plastoquinone + 4 hnu + 2 H2O = 2 a plastoquinol + O2. Its function is as follows. Photosystem II (PSII) is a light-driven water:plastoquinone oxidoreductase that uses light energy to abstract electrons from H(2)O, generating O(2) and a proton gradient subsequently used for ATP formation. It consists of a core antenna complex that captures photons, and an electron transfer chain that converts photonic excitation into a charge separation. The D1/D2 (PsbA/PsbD) reaction center heterodimer binds P680, the primary electron donor of PSII as well as several subsequent electron acceptors. D2 is needed for assembly of a stable PSII complex. This is Photosystem II D2 protein from Prochlorococcus marinus (strain MIT 9313).